Consider the following 476-residue polypeptide: 3-isopropylmalate dehydratase large subunit (476 aa).

The [4Fe-4S] cluster site is built by C355, C416, and C419.

The protein belongs to the aconitase/IPM isomerase family. LeuC type 1 subfamily. As to quaternary structure, heterodimer of LeuC and LeuD. [4Fe-4S] cluster serves as cofactor.

It carries out the reaction (2R,3S)-3-isopropylmalate = (2S)-2-isopropylmalate. The protein operates within amino-acid biosynthesis; L-leucine biosynthesis; L-leucine from 3-methyl-2-oxobutanoate: step 2/4. Its function is as follows. Catalyzes the isomerization between 2-isopropylmalate and 3-isopropylmalate, via the formation of 2-isopropylmaleate. The protein is 3-isopropylmalate dehydratase large subunit of Sphingopyxis alaskensis (strain DSM 13593 / LMG 18877 / RB2256) (Sphingomonas alaskensis).